The sequence spans 138 residues: Small ribosomal subunit protein uS11c (138 aa).

The tract at residues 1–21 (MTKSIPRIGSRRGGRIASRKN) is disordered. A compositionally biased stretch (basic residues) spans 9-21 (GSRRGGRIASRKN).

Belongs to the universal ribosomal protein uS11 family. In terms of assembly, part of the 30S ribosomal subunit.

The protein localises to the plastid. It is found in the chloroplast. This chain is Small ribosomal subunit protein uS11c, found in Calycanthus floridus var. glaucus (Eastern sweetshrub).